A 527-amino-acid chain; its full sequence is Estrogen receptor beta (527 aa).

The interval 1–145 is modulating; the sequence is MDVKNSPSSL…SPSSKRDAHF (145 aa). Residues Ser-84 and Ser-102 each carry the phosphoserine; by MAPK modification. 2 consecutive NR C4-type zinc fingers follow at residues 146–166 and 182–206; these read CAVC…CEGC and CPAT…LRKC. Residues 146 to 211 constitute a DNA-binding region (nuclear receptor); it reads CAVCSDYASG…RLRKCYEVGM (66 aa). Positions 261–495 constitute an NR LBD domain; sequence SPEQLVLTLL…DLLLEMLNAH (235 aa). Residues 505–527 form a disordered region; the sequence is TRSERNLAEDSESKEGSQKPQAQ. Basic and acidic residues predominate over residues 506–521; sequence RSERNLAEDSESKEGS.

The protein belongs to the nuclear hormone receptor family. NR3 subfamily. In terms of assembly, binds DNA as a homodimer. Can form a heterodimer with ESR1. Interacts with NCOA1, NCOA3, NCOA5 and NCOA6 coactivators, leading to a strong increase of transcription of target genes. Interacts with UBE1C and AKAP13. Interacts with DNTTIP2. Interacts with CCDC62 in the presence of estradiol/E2; this interaction seems to enhance the transcription of target genes. Interacts with DNAAF4. Interacts with PRMT2. Interacts with CCAR2 (via N-terminus) in a ligand-independent manner. Interacts with RBM39, in the presence of estradiol (E2). Interacts with STUB1/CHIP. In terms of processing, phosphorylation at Ser-84 and Ser-102 recruits NCOA1.

The protein localises to the nucleus. Functionally, nuclear hormone receptor. Binds estrogens with an affinity similar to that of ESR1/ER-alpha, and activates expression of reporter genes containing estrogen response elements (ERE) in an estrogen-dependent manner. The protein is Estrogen receptor beta (ESR2) of Ovis aries (Sheep).